Reading from the N-terminus, the 255-residue chain is Electron transfer flavoprotein subunit beta (255 aa).

Ala-2 carries the N-acetylalanine modification. AMP is bound by residues Ala-9, Asn-39–Cys-42, Cys-66, and Gly-123–Thr-134. The recognition loop stretch occupies residues Ala-183–Lys-205. Position 200 is an N6,N6,N6-trimethyllysine; by ETFBKMT; alternate (Lys-200). Lys-200 carries the N6-acetyllysine; alternate modification. Position 200 is an N6-methyllysine; alternate (Lys-200). Position 203 is an N6,N6,N6-trimethyllysine; by ETFBKMT (Lys-203). Lys-210 is subject to N6-acetyllysine; alternate. Lys-210 is subject to N6-succinyllysine; alternate. Residues Ser-223 and Ser-226 each carry the phosphoserine modification. Lys-238 bears the N6-acetyllysine mark. N6-acetyllysine; alternate is present on Lys-248. Lys-248 carries the N6-succinyllysine; alternate modification.

The protein belongs to the ETF beta-subunit/FixA family. Heterodimer composed of ETFA and ETFB. Identified in a complex that contains ETFA, ETFB and ETFRF1. Interacts with ACADM. Post-translationally, methylated. Trimethylation at Lys-200 and Lys-203 may negatively regulate the activity in electron transfer from acyl-CoA dehydrogenases.

Its subcellular location is the mitochondrion matrix. Heterodimeric electron transfer flavoprotein that accepts electrons from several mitochondrial dehydrogenases, including acyl-CoA dehydrogenases, glutaryl-CoA and sarcosine dehydrogenase. It transfers the electrons to the main mitochondrial respiratory chain via ETF-ubiquinone oxidoreductase. Required for normal mitochondrial fatty acid oxidation and normal amino acid metabolism. ETFB binds an AMP molecule that probably has a purely structural role. This is Electron transfer flavoprotein subunit beta from Mus musculus (Mouse).